Reading from the N-terminus, the 396-residue chain is Probable peptidoglycan glycosyltransferase FtsW (396 aa).

Topologically, residues 1-27 (MPFLDKVKQQYEDWTRITPSNLLYDRA) are cytoplasmic. A helical membrane pass occupies residues 28 to 48 (LLLLFFVLLLIGLLAVSSASI). Topologically, residues 49 to 64 (PVGTRLFKDPFYFAKR) are periplasmic. A helical transmembrane segment spans residues 65–85 (DAIYVFLSCVTCYLCVQVPME). Over 86–93 (KWEQWHVR) the chain is Cytoplasmic. A helical membrane pass occupies residues 94 to 114 (LFAFAIFLLILVLIPGIGLSV). Over 115-122 (NGARRWIP) the chain is Periplasmic. Residues 123 to 143 (MVLFNFQPAEFAKLALTCFLA) form a helical membrane-spanning segment. The Cytoplasmic segment spans residues 144 to 157 (SYFTRKYDEVRSRK). A helical membrane pass occupies residues 158-178 (LSAFKPFALMGLMGLFLLSQP). Residues 179–183 (DLGST) lie on the Periplasmic side of the membrane. The next 2 helical transmembrane spans lie at 184 to 204 (VVLFVITFGLLFIVGANFWQF) and 205 to 225 (VGLMAFGGLLFVWLVLSSAYR). Over 226-285 (LKRFTGFLDPFKDPYGTGFQLSNSLMAFGRGEWVGEGLGNSIQKLEYLPEAHTDFVMAVV) the chain is Periplasmic. Residues 286–306 (GEEFGFLGILVIVILLGLLIF) form a helical membrane-spanning segment. At 307-323 (RAMKIGRESLLLEQRFK) the chain is on the cytoplasmic side. The chain crosses the membrane as a helical span at residues 324 to 344 (GFFAFGISFWIFFQGFVNLGM). Residues 345 to 355 (SLGLLPTKGLT) lie on the Periplasmic side of the membrane. A helical membrane pass occupies residues 356–376 (FPLISYGGSSLIIMSMTIGLL). Topologically, residues 377–396 (LRIDHENRLMRIGQARLRDD) are cytoplasmic.

This sequence belongs to the SEDS family. FtsW subfamily.

It is found in the cell inner membrane. It catalyses the reaction [GlcNAc-(1-&gt;4)-Mur2Ac(oyl-L-Ala-gamma-D-Glu-L-Lys-D-Ala-D-Ala)](n)-di-trans,octa-cis-undecaprenyl diphosphate + beta-D-GlcNAc-(1-&gt;4)-Mur2Ac(oyl-L-Ala-gamma-D-Glu-L-Lys-D-Ala-D-Ala)-di-trans,octa-cis-undecaprenyl diphosphate = [GlcNAc-(1-&gt;4)-Mur2Ac(oyl-L-Ala-gamma-D-Glu-L-Lys-D-Ala-D-Ala)](n+1)-di-trans,octa-cis-undecaprenyl diphosphate + di-trans,octa-cis-undecaprenyl diphosphate + H(+). Its pathway is cell wall biogenesis; peptidoglycan biosynthesis. Peptidoglycan polymerase that is essential for cell division. The polypeptide is Probable peptidoglycan glycosyltransferase FtsW (Pasteurella multocida (strain Pm70)).